The sequence spans 262 residues: Adenosylcobinamide-GDP ribazoletransferase (262 aa).

A run of 6 helical transmembrane segments spans residues 43 to 63, 66 to 86, 120 to 140, 146 to 166, 191 to 211, and 242 to 262; these read YFGL…WLTQ, LPAG…TGGF, GAIA…ELAL, AGSA…SIIF, LFIL…LAAL, and AAQQ…GSIL.

It belongs to the CobS family. It depends on Mg(2+) as a cofactor.

It localises to the cell inner membrane. It carries out the reaction alpha-ribazole + adenosylcob(III)inamide-GDP = adenosylcob(III)alamin + GMP + H(+). The enzyme catalyses alpha-ribazole 5'-phosphate + adenosylcob(III)inamide-GDP = adenosylcob(III)alamin 5'-phosphate + GMP + H(+). It participates in cofactor biosynthesis; adenosylcobalamin biosynthesis; adenosylcobalamin from cob(II)yrinate a,c-diamide: step 7/7. Its function is as follows. Joins adenosylcobinamide-GDP and alpha-ribazole to generate adenosylcobalamin (Ado-cobalamin). Also synthesizes adenosylcobalamin 5'-phosphate from adenosylcobinamide-GDP and alpha-ribazole 5'-phosphate. In Shewanella putrefaciens (strain CN-32 / ATCC BAA-453), this protein is Adenosylcobinamide-GDP ribazoletransferase.